Reading from the N-terminus, the 153-residue chain is Probable histone H2A.2 (153 aa).

Disordered regions lie at residues 1–24 (MDAS…KKSV) and 127–153 (KKTE…PKKA). Residues 127 to 141 (KKTERSNTVSKEPKS) are compositionally biased toward basic and acidic residues. Over residues 142-153 (PKPKAGKSPKKA) the composition is skewed to basic residues. Residues 149–152 (SPKK) carry the SPKK motif motif.

Belongs to the histone H2A family. In terms of assembly, the nucleosome is a histone octamer containing two molecules each of H2A, H2B, H3 and H4 assembled in one H3-H4 heterotetramer and two H2A-H2B heterodimers. The octamer wraps approximately 147 bp of DNA.

It localises to the nucleus. The protein localises to the chromosome. Its function is as follows. Core component of nucleosome. Nucleosomes wrap and compact DNA into chromatin, limiting DNA accessibility to the cellular machineries which require DNA as a template. Histones thereby play a central role in transcription regulation, DNA repair, DNA replication and chromosomal stability. DNA accessibility is regulated via a complex set of post-translational modifications of histones, also called histone code, and nucleosome remodeling. The polypeptide is Probable histone H2A.2 (Medicago truncatula (Barrel medic)).